The chain runs to 940 residues: Translation initiation factor IF-2 (940 aa).

Disordered stretches follow at residues 116–137, 151–196, 210–294, and 318–346; these read PEQE…SSDT, EVEA…EQRS, AVRK…VKKV, and HSAP…VANR. Residues 121-137 are compositionally biased toward polar residues; the sequence is LESTSVAEIPESVSSDT. Residues 159–180 are compositionally biased toward acidic residues; that stretch reads PEPEVEATPEPEVEDVVAEEAE. Residues 181–193 show a composition bias toward low complexity; sequence PAAAEPAPAPVVE. The segment covering 213–239 has biased composition (basic and acidic residues); sequence KKAEEEAEVARRKADAEKAEAAAKQKA. Residues 282–294 show a composition bias toward basic residues; sequence KHNKKAGKAVKKV. The segment covering 326–337 has biased composition (low complexity); that stretch reads GGQNNNSSNSGS. The region spanning 441-610 is the tr-type G domain; sequence ARAPVVTVMG…ALQAELLELS (170 aa). The G1 stretch occupies residues 450 to 457; it reads GHVDHGKT. Residue 450-457 coordinates GTP; it reads GHVDHGKT. A G2 region spans residues 475–479; that stretch reads GITQH. Residues 496 to 499 form a G3 region; that stretch reads DTPG. Residues 496 to 500 and 550 to 553 contribute to the GTP site; these read DTPGH and NKID. Residues 550-553 form a G4 region; sequence NKID. A G5 region spans residues 586-588; it reads SAQ.

This sequence belongs to the TRAFAC class translation factor GTPase superfamily. Classic translation factor GTPase family. IF-2 subfamily.

Its subcellular location is the cytoplasm. Its function is as follows. One of the essential components for the initiation of protein synthesis. Protects formylmethionyl-tRNA from spontaneous hydrolysis and promotes its binding to the 30S ribosomal subunits. Also involved in the hydrolysis of GTP during the formation of the 70S ribosomal complex. This is Translation initiation factor IF-2 from Teredinibacter turnerae (strain ATCC 39867 / T7901).